We begin with the raw amino-acid sequence, 200 residues long: Recombination protein RecR (200 aa).

Residues 59-74 form a C4-type zinc finger; sequence CSVCGSLDTSDPCAIC. The Toprim domain occupies 82-177; sequence RLLCVVEEVG…SVTMLARGVP (96 aa).

It belongs to the RecR family.

In terms of biological role, may play a role in DNA repair. It seems to be involved in an RecBC-independent recombinational process of DNA repair. It may act with RecF and RecO. This is Recombination protein RecR from Caulobacter sp. (strain K31).